The chain runs to 355 residues: MLASKLDPFLKRFEELNSLLSSSDILNDISKMTTLSKEQKNLEPIVLKTKEYLKTLDNIEENKALLNDPELGELAKEELKTLEELKPKLEEEIKILLLPKDLNDERNIFLEIRAGTGGDEASLFVGDLVKAYARYAENRGYKLEIVSSSEGSVGGFKEIIMLVKGTGAYSRLKYEGGTHRVQRVPQTESQGRVHTSAITVAVMPEVDDIEIEINPNDLKVDVMRSSGHGGQSVNTTDSAVRITHIPTGIVVVNQDGKSQHKNKESAMKVLKARLYEMQENERLAKESEARKSQVGSGDRSERIRTYNFPQNRISDHRINLTLYRLDAIMQDGLFDEIIEPLITHHQAQALQEQNL.

Glutamine 231 is modified (N5-methylglutamine). Basic and acidic residues predominate over residues 281–291 (ERLAKESEARK). A disordered region spans residues 281–302 (ERLAKESEARKSQVGSGDRSER).

The protein belongs to the prokaryotic/mitochondrial release factor family. Methylated by PrmC. Methylation increases the termination efficiency of RF1.

The protein localises to the cytoplasm. Its function is as follows. Peptide chain release factor 1 directs the termination of translation in response to the peptide chain termination codons UAG and UAA. This Campylobacter jejuni subsp. doylei (strain ATCC BAA-1458 / RM4099 / 269.97) protein is Peptide chain release factor 1.